The chain runs to 521 residues: MANMDIDEFKEFGKAAIDFVADYLVNIRDRDVLPSVEPGYLHDLLPNEIPEKGDDWKTIMEEFKRFIVPGLTHWQSPHFHAFYPSQTSYSSIVGETLAAGLGVVGFSWICSPVCTELEVIMMNWIGQLLNLPRCFLNCDEGNGGGVIQGSASESIFIAVLVAREQAVRRLKNEHPELTEAEIRGRLVAYTSDQSNSAVEKSGILGAIKMRLLPADDDCVLRGRTLKKAVEEDKANGLFPVIMVATLGTTGTCAYDNLEEIGPYCNDNKLWLHVDAAYAGASFCLPEYAWIKKGLEMADSLNFNLHKWLFVNFDCCAMWFKDAAMITEAFSVDRIYLQHKFQGMSKAPDYRHWQIQLGRRFRSLKVWITLKTMGAEKIRELIRFHISLAQKFEQYVRADPRFEVTSSTLALVCFRLKGEDTYSKQLLDNIVKRKKIYMIPATYQGKFILRFMIAGIDPQAEDIDYAWNEVKSQTDLLLGVDDNGNNVCSKKLIKEEIFEKDNPVGKITESLGGLVLANEKAQ.

Residue K306 is modified to N6-(pyridoxal phosphate)lysine.

The protein belongs to the group II decarboxylase family. Pyridoxal 5'-phosphate serves as cofactor. As to expression, highly expressed in the cuticle and midgut. Low expression in the head and thorax.

The enzyme catalyses L-dopa + O2 + H2O + H(+) = 3,4-dihydroxyphenylacetaldehyde + H2O2 + NH4(+) + CO2. Its function is as follows. Catalyzes the decarboxylation-oxidative deamination of L-3,4-dihydroxyphenylalanine (L-DOPA) to 3,4-dihydroxylphenylacetaldehyde (DHPAA). Involved in cuticle development. Probably responsible for the protein cross-linking during the development of flexible cuticles. The protein is 3,4-dihydroxyphenylacetaldehyde synthase of Aedes aegypti (Yellowfever mosquito).